A 626-amino-acid polypeptide reads, in one-letter code: Trehalase (626 aa).

Positions 1-35 (MASSCSIRCGSRNILVNAAATFLALLVVLRCFANA) are cleaved as a signal peptide. The Extracellular segment spans residues 36-595 (EKPSPCQSDV…STPQPVVVST (560 aa)). The N-linked (GlcNAc...) asparagine glycan is linked to Asn-104. Substrate-binding positions include Arg-181, 188 to 189 (WD), Asn-225, and 234 to 236 (RSQ). The N-linked (GlcNAc...) asparagine glycan is linked to Asn-274. Residues 299-301 (RPE) and Gly-333 each bind substrate. The Proton donor/acceptor role is filled by Asp-335. 4 N-linked (GlcNAc...) asparagine glycosylation sites follow: Asn-350, Asn-384, Asn-498, and Asn-525. Glu-532 (proton donor/acceptor) is an active-site residue. Glu-547 serves as a coordination point for substrate. A helical membrane pass occupies residues 596 to 616 (AGQVMTGILALVISLAAGFIG). At 617–626 (KMRCANNAAQ) the chain is on the cytoplasmic side.

This sequence belongs to the glycosyl hydrolase 37 family. In terms of assembly, monomer. Glycosylated; contains 3.1% carbohydrates.

The protein resides in the membrane. It catalyses the reaction alpha,alpha-trehalose + H2O = alpha-D-glucose + beta-D-glucose. With respect to regulation, inhibited by sodium, potassium and ammonium ions, and by TEMED. The protein is Trehalase of Apis mellifera (Honeybee).